The following is a 545-amino-acid chain: Chaperonin GroEL (545 aa).

ATP contacts are provided by residues 30 to 33 (TLGP), lysine 51, 87 to 91 (DGTTT), glycine 415, and aspartate 495.

Belongs to the chaperonin (HSP60) family. In terms of assembly, forms a cylinder of 14 subunits composed of two heptameric rings stacked back-to-back. Interacts with the co-chaperonin GroES.

The protein resides in the cytoplasm. It carries out the reaction ATP + H2O + a folded polypeptide = ADP + phosphate + an unfolded polypeptide.. Its function is as follows. Together with its co-chaperonin GroES, plays an essential role in assisting protein folding. The GroEL-GroES system forms a nano-cage that allows encapsulation of the non-native substrate proteins and provides a physical environment optimized to promote and accelerate protein folding. In Shewanella baltica (strain OS185), this protein is Chaperonin GroEL.